We begin with the raw amino-acid sequence, 308 residues long: MKPRIAYRPLHGILLLDKPAGLSSNNALQAARRLLRAEKGGHTGSLDPLATGLLPLCFGEATKIAGLLLGSAKAYDAEIVLGVTTDTDDADGEPLRERAVPDVSEADLQVALAAFIGRIQQQAPIYSALKQGGEPLYAKARRGEVIDAPVREVEVQAIEVLGYSAPRLTLRVTCGSGTYIRSLARDLGEVLGCGAHIASLRRLWVEPFRAPQMITLEGLATALEAGAEAQTVLLPIEAGLADFARIVLDAALAARFRMGQRLRDAAFPTGQVAVFGPDGSPSGLGLVDADGRLSPQRLFNGLNEISVC.

The active-site Nucleophile is D47.

This sequence belongs to the pseudouridine synthase TruB family. Type 1 subfamily.

The enzyme catalyses uridine(55) in tRNA = pseudouridine(55) in tRNA. In terms of biological role, responsible for synthesis of pseudouridine from uracil-55 in the psi GC loop of transfer RNAs. This is tRNA pseudouridine synthase B from Xanthomonas oryzae pv. oryzae (strain MAFF 311018).